A 134-amino-acid chain; its full sequence is Arsenate reductase 2 (134 aa).

Catalysis depends on nucleophile residues Cys11, Cys83, and Cys90. 2 disulfides stabilise this stretch: Cys11–Cys83 and Cys83–Cys90.

It belongs to the low molecular weight phosphotyrosine protein phosphatase family. Thioredoxin-coupled ArsC subfamily.

It localises to the cytoplasm. It catalyses the reaction arsenate + [thioredoxin]-dithiol + H(+) = arsenite + [thioredoxin]-disulfide + H2O. Catalyzes the reduction of arsenate [As(V)] to arsenite [As(III)]. The protein is Arsenate reductase 2 of Bacillus cereus (strain ATCC 10987 / NRS 248).